Consider the following 83-residue polypeptide: Small ribosomal subunit protein bS20 (83 aa).

This sequence belongs to the bacterial ribosomal protein bS20 family.

Binds directly to 16S ribosomal RNA. This chain is Small ribosomal subunit protein bS20, found in Flavobacterium johnsoniae (strain ATCC 17061 / DSM 2064 / JCM 8514 / BCRC 14874 / CCUG 350202 / NBRC 14942 / NCIMB 11054 / UW101) (Cytophaga johnsonae).